The sequence spans 97 residues: uncharacterized protein (97 aa).

This is an uncharacterized protein from Caenorhabditis elegans.